A 391-amino-acid chain; its full sequence is MGLNQSTFNPLGFFPSHQLDPLFKANAGSADWDKNPNKDPWPQAHDTAVGAFGPGLVPPHGGLLGWSSQAQGLSVTVPDTPPPPSTNRDKGRKPTPATPPLRDTHPQAMTWNTSSFQSYLQNPKVRGLYFPAGGSTSSIVNPVPTTASTTSSSFSTTGVPVSTMDITSSGFLGPLLALQAVFFLLTKILTMPQSLDSLWTSLNFLGGTPACPGLNSQSPTSSHSPTCCPPTCPGYRWMCLRRSIIFLFILLLCLIFLLVLLDYQGMLPVCPLLPTVTGTTTTTGPCRTCTPIVPGISSYPSCCCTKPTDGNCTCIPIPSSWAFAKFLWDWALARFSWLNSLLPFVQWFAGLSPTVWLLVIWMMWFWGPSLFSILSPFLPLLPLFFWLWAYI.

N-acetylmethionine is present on M1. G2 carries N-myristoyl glycine; by host lipidation. The pre-S1 stretch occupies residues 2-108; that stretch reads GLNQSTFNPL…PPLRDTHPQA (107 aa). The segment at 2-163 is pre-S; that stretch reads GLNQSTFNPL…FSTTGVPVST (162 aa). Topologically, residues 2–170 are virion surface; in external conformation; it reads GLNQSTFNPL…VSTMDITSSG (169 aa). Topologically, residues 2–242 are intravirion; in internal conformation; that stretch reads GLNQSTFNPL…PGYRWMCLRR (241 aa). The tract at residues 73–107 is disordered; the sequence is LSVTVPDTPPPPSTNRDKGRKPTPATPPLRDTHPQ. A pre-S2 region spans residues 109-163; sequence MTWNTSSFQSYLQNPKVRGLYFPAGGSTSSIVNPVPTTASTTSSSFSTTGVPVST. Residues 171–191 traverse the membrane as a helical segment; sequence FLGPLLALQAVFFLLTKILTM. The Intravirion; in external conformation segment spans residues 192-242; that stretch reads PQSLDSLWTSLNFLGGTPACPGLNSQSPTSSHSPTCCPPTCPGYRWMCLRR. A helical transmembrane segment spans residues 243 to 263; sequence SIIFLFILLLCLIFLLVLLDY. Residues 264–339 are Virion surface-facing; that stretch reads QGMLPVCPLL…WALARFSWLN (76 aa). A glycan (N-linked (GlcNAc...) asparagine; by host) is linked at N311. A helical transmembrane segment spans residues 340–360; it reads SLLPFVQWFAGLSPTVWLLVI. Residues 361-366 are Intravirion-facing; it reads WMMWFW. Residues 367 to 389 form a helical membrane-spanning segment; that stretch reads GPSLFSILSPFLPLLPLFFWLWA. Residues 390-391 are Virion surface-facing; that stretch reads YI.

This sequence belongs to the orthohepadnavirus major surface antigen family. In its internal form (Li-HBsAg), interacts with the capsid protein and with the isoform S. Interacts with host chaperone CANX. As to quaternary structure, associates with host chaperone CANX through its pre-S2 N glycan; this association may be essential for isoform M proper secretion. In terms of assembly, interacts with isoform L. Interacts with the antigens of satellite virus HDV (HDVAgs); this interaction is required for encapsidation of HDV genomic RNA. In terms of processing, isoform M is N-terminally acetylated by host at a ratio of 90%, and N-glycosylated by host at the pre-S2 region. Myristoylated.

Its subcellular location is the virion membrane. The large envelope protein exists in two topological conformations, one which is termed 'external' or Le-HBsAg and the other 'internal' or Li-HBsAg. In its external conformation the protein attaches the virus to cell receptors and thereby initiating infection. This interaction determines the species specificity and liver tropism. This attachment induces virion internalization predominantly through caveolin-mediated endocytosis. The large envelope protein also assures fusion between virion membrane and endosomal membrane. In its internal conformation the protein plays a role in virion morphogenesis and mediates the contact with the nucleocapsid like a matrix protein. Functionally, the middle envelope protein plays an important role in the budding of the virion. It is involved in the induction of budding in a nucleocapsid independent way. In this process the majority of envelope proteins bud to form subviral lipoprotein particles of 22 nm of diameter that do not contain a nucleocapsid. This is Large envelope protein from Woolly monkey hepatitis B virus (isolate Louisville) (WMHBV).